A 146-amino-acid polypeptide reads, in one-letter code: Large ribosomal subunit protein uL15 (146 aa).

Positions 1-54 (MTLRLNELAPAEGAKRDNRRLGRGIGSGVGKTGGRGVKGQKSRKSGGVRPGFEG) are disordered. The segment covering 23-37 (RGIGSGVGKTGGRGV) has biased composition (gly residues).

It belongs to the universal ribosomal protein uL15 family. In terms of assembly, part of the 50S ribosomal subunit.

Its function is as follows. Binds to the 23S rRNA. The protein is Large ribosomal subunit protein uL15 of Acinetobacter baylyi (strain ATCC 33305 / BD413 / ADP1).